Consider the following 297-residue polypeptide: GTPase Era (297 aa).

The Era-type G domain maps to 3-171 (KSGFVSIVGR…IKVIQNYLEE (169 aa)). A G1 region spans residues 11-18 (GRPNVGKS). GTP is bound at residue 11–18 (GRPNVGKS). A G2 region spans residues 37-41 (QTTRN). The G3 stretch occupies residues 58–61 (DTPG). GTP is bound by residues 58–62 (DTPGI) and 120–123 (NKID). A G4 region spans residues 120–123 (NKID). The tract at residues 150 to 152 (ISA) is G5. Residues 194–280 (IREKVLHYLN…NLQLWVKVKE (87 aa)) form the KH type-2 domain.

It belongs to the TRAFAC class TrmE-Era-EngA-EngB-Septin-like GTPase superfamily. Era GTPase family. In terms of assembly, monomer.

It localises to the cytoplasm. The protein localises to the cell membrane. An essential GTPase that binds both GDP and GTP, with rapid nucleotide exchange. Plays a role in 16S rRNA processing and 30S ribosomal subunit biogenesis and possibly also in cell cycle regulation and energy metabolism. The protein is GTPase Era of Clostridioides difficile (strain 630) (Peptoclostridium difficile).